The primary structure comprises 338 residues: Large ribosomal subunit protein uL3 (338 aa).

The disordered stretch occupies residues 230 to 253 (HRKGHRRTGTIGPQAPALMFTQPR).

The protein belongs to the universal ribosomal protein uL3 family. In terms of assembly, part of the 50S ribosomal subunit. Forms a cluster with proteins L14 and L24e.

Functionally, one of the primary rRNA binding proteins, it binds directly near the 3'-end of the 23S rRNA, where it nucleates assembly of the 50S subunit. This is Large ribosomal subunit protein uL3 from Pyrobaculum neutrophilum (strain DSM 2338 / JCM 9278 / NBRC 100436 / V24Sta) (Thermoproteus neutrophilus).